The following is a 233-amino-acid chain: Large ribosomal subunit protein uL1 (233 aa).

Belongs to the universal ribosomal protein uL1 family. As to quaternary structure, part of the 50S ribosomal subunit.

Its function is as follows. Binds directly to 23S rRNA. The L1 stalk is quite mobile in the ribosome, and is involved in E site tRNA release. Functionally, protein L1 is also a translational repressor protein, it controls the translation of the L11 operon by binding to its mRNA. The chain is Large ribosomal subunit protein uL1 from Shewanella frigidimarina (strain NCIMB 400).